The sequence spans 173 residues: Adenine phosphoribosyltransferase (173 aa).

It belongs to the purine/pyrimidine phosphoribosyltransferase family. Homodimer.

The protein localises to the cytoplasm. It catalyses the reaction AMP + diphosphate = 5-phospho-alpha-D-ribose 1-diphosphate + adenine. Its pathway is purine metabolism; AMP biosynthesis via salvage pathway; AMP from adenine: step 1/1. Functionally, catalyzes a salvage reaction resulting in the formation of AMP, that is energically less costly than de novo synthesis. In Listeria monocytogenes serotype 4b (strain CLIP80459), this protein is Adenine phosphoribosyltransferase.